The chain runs to 233 residues: Large ribosomal subunit protein uL1 (233 aa).

The protein belongs to the universal ribosomal protein uL1 family. In terms of assembly, part of the 50S ribosomal subunit.

In terms of biological role, binds directly to 23S rRNA. The L1 stalk is quite mobile in the ribosome, and is involved in E site tRNA release. Functionally, protein L1 is also a translational repressor protein, it controls the translation of the L11 operon by binding to its mRNA. This chain is Large ribosomal subunit protein uL1, found in Marinomonas sp. (strain MWYL1).